A 376-amino-acid polypeptide reads, in one-letter code: MAKRDYYEVLGVARDVSEQDLKKAYRKVAMKFHPDRNPDDASAEEKFKEASEAYEVLSDKQKRAAYDQFGHAGVEGQGGMGGGAEGFGSFSDIFGDVFGDIFGGAGGGRGRGGPSRGADLRYTLDLSLEDAVRGTSVKIKVPTLVSCTNCGGSGAKPGTTATTCNTCGGHGQVRMQQGFFSVQQTCPTCRGQGKTISDPCNKCHGHGRVEETKTLSVKVPAGVDTGDRIRLAGEGEAGADGGPSGDLYVQVHVKDHEFFQREGRNLYCEVPISIFDACLGGDLEVPTLDGRVKLKVPAETQTGKLFRLRGKGVTPIRGGAAGDLLCRVIVETPVNLSNKQKELLEQLKDTFKGTQHSPKQQSWFEGMKNFFGDMKM.

The J domain maps to 5–70; the sequence is DYYEVLGVAR…QKRAAYDQFG (66 aa). The segment at 134–212 adopts a CR-type zinc-finger fold; sequence GTSVKIKVPT…CHGHGRVEET (79 aa). The Zn(2+) site is built by Cys-147, Cys-150, Cys-164, Cys-167, Cys-186, Cys-189, Cys-200, and Cys-203. CXXCXGXG motif repeat units follow at residues 147–154, 164–171, 186–193, and 200–207; these read CTNCGGSG, CNTCGGHG, CPTCRGQG, and CNKCHGHG.

The protein belongs to the DnaJ family. In terms of assembly, homodimer. Zn(2+) is required as a cofactor.

The protein localises to the cytoplasm. Its function is as follows. Participates actively in the response to hyperosmotic and heat shock by preventing the aggregation of stress-denatured proteins and by disaggregating proteins, also in an autonomous, DnaK-independent fashion. Unfolded proteins bind initially to DnaJ; upon interaction with the DnaJ-bound protein, DnaK hydrolyzes its bound ATP, resulting in the formation of a stable complex. GrpE releases ADP from DnaK; ATP binding to DnaK triggers the release of the substrate protein, thus completing the reaction cycle. Several rounds of ATP-dependent interactions between DnaJ, DnaK and GrpE are required for fully efficient folding. Also involved, together with DnaK and GrpE, in the DNA replication of plasmids through activation of initiation proteins. This chain is Chaperone protein DnaJ, found in Teredinibacter turnerae (strain ATCC 39867 / T7901).